Here is a 492-residue protein sequence, read N- to C-terminus: Katanin p60 ATPase-containing subunit A1 (492 aa).

Residues 80–186 (STPPKASQQE…ESEPKKFDST (107 aa)) form a disordered region. Positions 145–171 (PNDKGKAVRGREKKDQQNKGKEEKSKS) are enriched in basic and acidic residues. 250–257 (GPPGTGKT) is a binding site for ATP.

The protein belongs to the AAA ATPase family. Katanin p60 subunit A1 subfamily. Can homooligomerize into hexameric rings, which may be promoted by interaction with microtubules. Interacts with KATNB1, which may serve as a targeting subunit.

It localises to the cytoplasm. Its subcellular location is the cytoskeleton. The protein localises to the microtubule organizing center. The protein resides in the centrosome. It is found in the spindle pole. It localises to the spindle. It catalyses the reaction n ATP + n H2O + a microtubule = n ADP + n phosphate + (n+1) alpha/beta tubulin heterodimers.. Its activity is regulated as follows. ATPase activity is stimulated by microtubules, which promote homooligomerization. ATP-dependent microtubule severing is stimulated by interaction with KATNB1. Catalytic subunit of a complex which severs microtubules in an ATP-dependent manner. Microtubule severing may promote rapid reorganization of cellular microtubule arrays and the release of microtubules from the centrosome following nucleation. The sequence is that of Katanin p60 ATPase-containing subunit A1 from Gallus gallus (Chicken).